We begin with the raw amino-acid sequence, 791 residues long: Phenylalanine--tRNA ligase beta subunit (791 aa).

The tRNA-binding domain occupies 39–148 (AADFSGVVVA…ADAPVGADIR (110 aa)). Residues 401–476 (PLRAPVRLRE…RVYGYDAIPR (76 aa)) enclose the B5 domain. D454, D460, E463, and E464 together coordinate Mg(2+). In terms of domain architecture, FDX-ACB spans 697–790 (SRFPLVRRDL…LAADFGAKLR (94 aa)).

The protein belongs to the phenylalanyl-tRNA synthetase beta subunit family. Type 1 subfamily. In terms of assembly, tetramer of two alpha and two beta subunits. Requires Mg(2+) as cofactor.

The protein localises to the cytoplasm. The catalysed reaction is tRNA(Phe) + L-phenylalanine + ATP = L-phenylalanyl-tRNA(Phe) + AMP + diphosphate + H(+). The chain is Phenylalanine--tRNA ligase beta subunit from Methylococcus capsulatus (strain ATCC 33009 / NCIMB 11132 / Bath).